Consider the following 377-residue polypeptide: N-acetylgalactosamine-6-phosphate deacetylase (377 aa).

Glu125 is a binding site for a divalent metal cation. 136-137 (AH) contacts substrate. Positions 191 and 212 each coordinate a divalent metal cation. Residues 215 to 216 (NG), Arg223, and 244 to 247 (DGHH) each bind substrate. Asp269 acts as the Proton donor/acceptor in catalysis. Residue 302-304 (LAG) participates in substrate binding.

This sequence belongs to the metallo-dependent hydrolases superfamily. NagA family. A divalent metal cation is required as a cofactor.

The catalysed reaction is N-acetyl-D-galactosamine 6-phosphate + H2O = D-galactosamine 6-phosphate + acetate. Catalyzes the deacetylation of N-acetyl-D-galactosamine 6-phosphate to D-galactosamine 6-phosphate. Can probably also catalyze the deacetylation of N-acetyl-D-glucosamine 6-phosphate to D-glucosamine 6-phosphate. This Escherichia coli O157:H7 protein is N-acetylgalactosamine-6-phosphate deacetylase (agaA).